We begin with the raw amino-acid sequence, 405 residues long: Beta-citrylglutamate synthase B (405 aa).

Residues 115–300 (FQELAGHGVP…VAGIVADFVL (186 aa)) enclose the ATP-grasp domain. ATP-binding positions include K154, 189 to 199 (QEYVKESHGRD), and R215. The Mg(2+) site is built by D260, E273, and N275. Mn(2+) contacts are provided by D260, E273, and N275. The disordered stretch occupies residues 359–387 (AMSTMSTSSTSSESEADLTETGPTPVGAN). A compositionally biased stretch (low complexity) spans 360-371 (MSTMSTSSTSSE).

This sequence belongs to the RimK family. It depends on Mg(2+) as a cofactor. The cofactor is Mn(2+).

It localises to the cytoplasm. It catalyses the reaction citrate + L-glutamate + ATP = beta-citrylglutamate + ADP + phosphate + H(+). The catalysed reaction is N-acetyl-L-aspartate + L-glutamate + ATP = N-acetyl-L-aspartyl-L-glutamate + ADP + phosphate + H(+). Catalyzes the synthesis of beta-citryl-L-glutamate and N-acetyl-L-aspartyl-L-glutamate. Beta-citryl-L-glutamate is synthesized more efficiently than N-acetyl-L-aspartyl-L-glutamate. The sequence is that of Beta-citrylglutamate synthase B (rimklb) from Danio rerio (Zebrafish).